The primary structure comprises 2223 residues: Sperm-associated antigen 17 (2223 aa).

Composition is skewed to basic and acidic residues over residues 144–172 and 200–212; these read RENE…EKKA and RRGE…RYID. The interval 144-214 is disordered; it reads RENEKKVIED…DHTNRYIDDE (71 aa). The stretch at 266 to 295 forms a coiled coil; sequence NQQQEVLLQSEDLEAEKLKKENAIKELKTF. Disordered stretches follow at residues 387–416, 680–710, 731–762, 950–1015, 1179–1212, and 1345–1378; these read MPTS…PPPV, MSVQ…LNNL, PQHE…PKKM, EERL…EPKI, GKIK…PEPV, and ETIP…PPPE. 3 stretches are compositionally biased toward basic and acidic residues: residues 743–756, 950–999, and 1182–1205; these read EIKD…DSHE, EERL…EQVK, and KGKE…KKEE. Positions 940 to 966 form a coiled coil; the sequence is WKEEQHRLAEEERLREEKKAEKKGKEA. Residues 1345 to 1354 show a composition bias toward polar residues; that stretch reads ETIPSEITNT. A coiled-coil region spans residues 1874-1907; sequence RHTASSKRWKEKIDKTRKEIETTQNYLMDIKNRI. 2 disordered regions span residues 1938–1957 and 1962–2008; these read TKKN…DLNL and HKVS…SYEP. Residues 1988–1998 show a composition bias toward polar residues; it reads TAQNQTENLTK.

As to quaternary structure, interacts (via the C-terminus) with SPAG6; the interaction probably occurs on polymerized microtubules. In terms of tissue distribution, highly expressed in testis. Expressed in organs that contain cilia-bearing cells including brain, oviduct, lung, and uterus.

It is found in the cytoplasm. It localises to the cytoskeleton. The protein localises to the flagellum axoneme. Its subcellular location is the cytoplasmic vesicle. The protein resides in the secretory vesicle. It is found in the acrosome. It localises to the golgi apparatus. Its function is as follows. Component of the central pair apparatus of ciliary axonemes. Plays a critical role in the function and structure of motile cilia. May play a role in endochondral bone formation, most likely because of a function in primary cilia of chondrocytes and osteoblasts. Essential for normal spermatogenesis and male fertility. Required for normal manchette structure, transport of proteins along the manchette microtubules and formation of the sperm head and flagellum. Essential for sperm flagellum development and proper assembly of the respiratory motile cilia central pair apparatus, but not the brain ependymal cilia. The protein is Sperm-associated antigen 17 (SPAG17) of Homo sapiens (Human).